A 247-amino-acid polypeptide reads, in one-letter code: 5-hydroxytryptamine receptor 2A (247 aa).

Residue Lys1 is a topological domain, extracellular. The helical transmembrane segment at 2-26 (LCAIWIYLDVLFSTASIMHLCAISL) threads the bilayer. A disulfide bridge connects residues Cys3 and Cys82. Residue Asp10 coordinates serotonin. Residues 27-29 (DRY) carry the DRY motif; important for ligand-induced conformation changes motif. The Cytoplasmic segment spans residues 27 to 46 (DRYVAIQNPIHHSRFNSRTK). The chain crosses the membrane as a helical span at residues 47 to 70 (AFLKIIAVWTISVGISMPVPVFGL). The Extracellular segment spans residues 71 to 87 (QDDSKVFKEGSCLLADD). The helical transmembrane segment at 88 to 113 (NFVLIGSFVAFFIPLTIMVITYFLTI) threads the bilayer. Topologically, residues 114 to 177 (KSLQKEATLC…QSISNEQKAC (64 aa)) are cytoplasmic. Ser135 bears the Phosphoserine mark. The chain crosses the membrane as a helical span at residues 178-203 (KVLGIVFFLFVVMWCPFFVTNIMAVI). Position 198 (Asn198) interacts with serotonin. An intrachain disulfide couples Cys204 to Cys208. The Extracellular portion of the chain corresponds to 204–211 (CKESCNED). Residues 212 to 237 (VIGALLNVFVWIGYLSSAVNPLVYTL) traverse the membrane as a helical segment. An NPxxY motif; important for ligand-induced conformation changes and signaling motif is present at residues 231 to 235 (NPLVY). Topologically, residues 238-247 (FNKTYRSAFA) are cytoplasmic.

It belongs to the G-protein coupled receptor 1 family. In terms of assembly, interacts (via C-terminus) with MPDZ and PATJ. May interact (via C-terminus) with MPP3, PRDX6, DLG4, DLG1, CASK, APBA1 and MAGI2. Interacts with GRM2 and DRD2; this may affect signaling. Detected in adult intestine, especially in mucosal epithelium, longitudinal and circular layers of muscularis externa and myenteric plexuses. Highly expressed in Paneth cells, and detected at lower levels in enterocytes (at protein level).

The protein resides in the cell membrane. Its subcellular location is the cell projection. The protein localises to the dendrite. It localises to the axon. It is found in the cytoplasmic vesicle. The protein resides in the membrane. Its subcellular location is the caveola. The protein localises to the presynapse. G-protein coupled receptor activity is regulated by lipids: oleamide increases HTR2A-mediated activity. Functionally, G-protein coupled receptor for 5-hydroxytryptamine (serotonin). Also functions as a receptor for various drugs and psychoactive substances, including mescaline, psilocybin, 1-(2,5-dimethoxy-4-iodophenyl)-2-aminopropane (DOI) and lysergic acid diethylamide (LSD). Ligand binding causes a conformation change that triggers signaling via guanine nucleotide-binding proteins (G proteins) and modulates the activity of downstream effectors. HTR2A is coupled to G(q)/G(11) G alpha proteins and activates phospholipase C-beta, releasing diacylglycerol (DAG) and inositol 1,4,5-trisphosphate (IP3) second messengers that modulate the activity of phosphatidylinositol 3-kinase and promote the release of Ca(2+) ions from intracellular stores, respectively. Beta-arrestin family members inhibit signaling via G proteins and mediate activation of alternative signaling pathways. Affects neural activity, perception, cognition and mood. Plays a role in the regulation of behavior, including responses to anxiogenic situations and psychoactive substances. Plays a role in intestinal smooth muscle contraction, and may play a role in arterial vasoconstriction. In Cavia porcellus (Guinea pig), this protein is 5-hydroxytryptamine receptor 2A (HTR2A).